Here is a 199-residue protein sequence, read N- to C-terminus: GTP cyclohydrolase-2 (199 aa).

Position 49 to 53 (49 to 53 (RIHSE)) interacts with GTP. Positions 54, 65, and 67 each coordinate Zn(2+). GTP is bound by residues Gln70, 92–94 (EGR), and Thr114. The Proton acceptor role is filled by Asp126. Catalysis depends on Arg128, which acts as the Nucleophile. Positions 149 and 154 each coordinate GTP.

Belongs to the GTP cyclohydrolase II family. Homodimer. It depends on Zn(2+) as a cofactor.

The enzyme catalyses GTP + 4 H2O = 2,5-diamino-6-hydroxy-4-(5-phosphoribosylamino)-pyrimidine + formate + 2 phosphate + 3 H(+). Its pathway is cofactor biosynthesis; riboflavin biosynthesis; 5-amino-6-(D-ribitylamino)uracil from GTP: step 1/4. Catalyzes the conversion of GTP to 2,5-diamino-6-ribosylamino-4(3H)-pyrimidinone 5'-phosphate (DARP), formate and pyrophosphate. This chain is GTP cyclohydrolase-2, found in Blochmanniella floridana.